Here is a 502-residue protein sequence, read N- to C-terminus: Ubiquitin-like-specific protease 1A (502 aa).

Active-site residues include His393, Asp410, and Cys461.

It belongs to the peptidase C48 family.

Functionally, protease that catalyzes two essential functions in the SUMO pathway: processing of full-length SUMOs to their mature forms and deconjugation of SUMO from targeted proteins. Cleaves precursors of SUM1 and SUM2, and very inefficiently of SUM3. Seems to be the only ULP1 able to cleave SUM3 precursors. Cleaves SUMO peptides better than SUMO-conjugated proteins. The chain is Ubiquitin-like-specific protease 1A (ULP1A) from Arabidopsis thaliana (Mouse-ear cress).